A 236-amino-acid chain; its full sequence is Eukaryotic translation initiation factor 3 subunit J (236 aa).

Disordered stretches follow at residues 1–88 (MADD…LANM) and 188–236 (SEKQ…DDFM). Acidic residues predominate over residues 28–46 (GEDDDEDVKESWEDEEEKK). Basic and acidic residues-rich tracts occupy residues 47-58 (DEEKPTKTEAPV), 68-88 (AKLEEQERLNEEEERKRLANM), and 188-197 (SEKQKMEKAN). Coiled-coil stretches lie at residues 61–112 (KPNK…LKSA) and 174–209 (ADIKKVKMSVESLHSEKQKMEKANAKKSAAKAKGKV). The segment covering 201 to 210 (SAAKAKGKVS) has biased composition (basic residues).

Belongs to the eIF-3 subunit J family. As to quaternary structure, component of the eukaryotic translation initiation factor 3 (eIF-3) complex. The eIF-3 complex interacts with pix.

The protein localises to the cytoplasm. Its function is as follows. Component of the eukaryotic translation initiation factor 3 (eIF-3) complex, which is involved in protein synthesis of a specialized repertoire of mRNAs and, together with other initiation factors, stimulates binding of mRNA and methionyl-tRNAi to the 40S ribosome. The eIF-3 complex specifically targets and initiates translation of a subset of mRNAs involved in cell proliferation. This is Eukaryotic translation initiation factor 3 subunit J from Drosophila virilis (Fruit fly).